The sequence spans 364 residues: C2 calcium-dependent domain-containing protein 4A (364 aa).

Disordered regions lie at residues 118–175 (GSPS…PPRC) and 192–242 (AGRS…RPER). Over residues 220-233 (SPGSPTQAPVTSLS) the composition is skewed to polar residues. The C2 domain maps to 254–364 (AGGALRLAAE…ELLLGPLLLL (111 aa)).

The protein belongs to the C2CD4 family.

It localises to the nucleus. In terms of biological role, may be involved in inflammatory process. May regulate cell architecture and adhesion. The polypeptide is C2 calcium-dependent domain-containing protein 4A (C2CD4A) (Bos taurus (Bovine)).